Consider the following 146-residue polypeptide: Ribonuclease H (146 aa).

The RNase H type-1 domain maps to 1 to 143 (MEKKVTIYTD…CDELARLAVR (143 aa)). Residues Asp-10, Glu-48, Asp-70, and Asp-135 each coordinate Mg(2+).

This sequence belongs to the RNase H family. Monomer. The cofactor is Mg(2+).

It is found in the cytoplasm. It carries out the reaction Endonucleolytic cleavage to 5'-phosphomonoester.. Functionally, endonuclease that specifically degrades the RNA of RNA-DNA hybrids. The protein is Ribonuclease H of Chlorobium phaeovibrioides (strain DSM 265 / 1930) (Prosthecochloris vibrioformis (strain DSM 265)).